The chain runs to 397 residues: Teichoic acid D-alanine hydrolase (397 aa).

Residues 1-23 (MKFNKVKLVIHACVLLFIIISIA) form the signal peptide.

Its subcellular location is the cell membrane. The catalysed reaction is [(4-D-Ala)-(2-GlcNAc)-Rib-ol-P]n-[Gro-P]m-beta-D-ManNAc-(1-&gt;4)-alpha-D-GlcNAc-P-peptidoglycan + n H2O = [(2-GlcNAc)-Rib-ol-P]n-[Gro-P]m-beta-D-ManNAc-(1-&gt;4)-alpha-D-GlcNAc-P-peptidoglycan + n D-alanine.. Functionally, catalyzes the liberation of D-alanyl moieties present on wall teichoic acid (WTA) and lipoteichoic acid (LTA). Affects the methicillin resistance level and autolysis in the presence of Triton X-100 as well as the cell wall structure. The polypeptide is Teichoic acid D-alanine hydrolase (fmtA) (Staphylococcus aureus (strain NCTC 8325 / PS 47)).